A 312-amino-acid polypeptide reads, in one-letter code: Ribosomal RNA small subunit methyltransferase H (312 aa).

S-adenosyl-L-methionine contacts are provided by residues 33 to 35 (AGH), Asp53, Phe79, Asp100, and Gln107.

The protein belongs to the methyltransferase superfamily. RsmH family.

It localises to the cytoplasm. It carries out the reaction cytidine(1402) in 16S rRNA + S-adenosyl-L-methionine = N(4)-methylcytidine(1402) in 16S rRNA + S-adenosyl-L-homocysteine + H(+). Specifically methylates the N4 position of cytidine in position 1402 (C1402) of 16S rRNA. The sequence is that of Ribosomal RNA small subunit methyltransferase H from Clostridium acetobutylicum (strain ATCC 824 / DSM 792 / JCM 1419 / IAM 19013 / LMG 5710 / NBRC 13948 / NRRL B-527 / VKM B-1787 / 2291 / W).